A 363-amino-acid polypeptide reads, in one-letter code: Teichoic acids export ATP-binding protein TagH (363 aa).

The region spanning 27-246 is the ABC transporter domain; sequence KHFFNIGNVD…YRKFSKDFKA (220 aa). 60–67 provides a ligand contact to ATP; the sequence is GINGSGKS. Positions 247-363 are unknown; that stretch reads QTAAYRKKYQ…KSQSVLFNSK (117 aa).

This sequence belongs to the ABC transporter superfamily. Teichoic acids exporter (TC 3.A.1.104.1) family. The complex is composed of two ATP-binding proteins (TagH) and two transmembrane proteins (TagG).

It localises to the cell membrane. The enzyme catalyses ATP + H2O + teichoic acidSide 1 = ADP + phosphate + teichoic acidSide 2.. Functionally, part of the ABC transporter complex TagGH involved in teichoic acids export. Responsible for energy coupling to the transport system. This chain is Teichoic acids export ATP-binding protein TagH, found in Lactiplantibacillus plantarum (strain ATCC BAA-793 / NCIMB 8826 / WCFS1) (Lactobacillus plantarum).